A 93-amino-acid polypeptide reads, in one-letter code: Large ribosomal subunit protein bL27 (93 aa).

Residues 1-10 (MLLKLQIQLF) constitute a propeptide that is removed on maturation.

It belongs to the bacterial ribosomal protein bL27 family. The N-terminus is cleaved by ribosomal processing cysteine protease Prp.

The protein is Large ribosomal subunit protein bL27 of Phytoplasma australiense.